Reading from the N-terminus, the 174-residue chain is Crossover junction endodeoxyribonuclease RuvC (174 aa).

Catalysis depends on residues D8, E67, and D139. Mg(2+) contacts are provided by D8, E67, and D139.

It belongs to the RuvC family. Homodimer which binds Holliday junction (HJ) DNA. The HJ becomes 2-fold symmetrical on binding to RuvC with unstacked arms; it has a different conformation from HJ DNA in complex with RuvA. In the full resolvosome a probable DNA-RuvA(4)-RuvB(12)-RuvC(2) complex forms which resolves the HJ. Mg(2+) serves as cofactor.

The protein localises to the cytoplasm. The enzyme catalyses Endonucleolytic cleavage at a junction such as a reciprocal single-stranded crossover between two homologous DNA duplexes (Holliday junction).. In terms of biological role, the RuvA-RuvB-RuvC complex processes Holliday junction (HJ) DNA during genetic recombination and DNA repair. Endonuclease that resolves HJ intermediates. Cleaves cruciform DNA by making single-stranded nicks across the HJ at symmetrical positions within the homologous arms, yielding a 5'-phosphate and a 3'-hydroxyl group; requires a central core of homology in the junction. The consensus cleavage sequence is 5'-(A/T)TT(C/G)-3'. Cleavage occurs on the 3'-side of the TT dinucleotide at the point of strand exchange. HJ branch migration catalyzed by RuvA-RuvB allows RuvC to scan DNA until it finds its consensus sequence, where it cleaves and resolves the cruciform DNA. This chain is Crossover junction endodeoxyribonuclease RuvC, found in Pseudomonas entomophila (strain L48).